The chain runs to 389 residues: Flap endonuclease 1 (389 aa).

Positions 1–105 (MGIKGLTALL…GELAKRKDKR (105 aa)) are N-domain. Asp34 provides a ligand contact to Mg(2+). Arg71 is a binding site for DNA. Mg(2+)-binding residues include Asp87, Glu159, Glu161, Asp180, and Asp182. The segment at 123–254 (EVEKLSKRTV…KTALKLIKEH (132 aa)) is I-domain. Glu159 contributes to the DNA binding site. DNA is bound by residues Gly232 and Asp234. Asp234 contributes to the Mg(2+) binding site. The interaction with PCNA stretch occupies residues 338–346 (SQNRLESFF). The tract at residues 356-389 (IGKRKVEETKSGKGSKAGLNKKSKGVSGYKSKKT) is disordered. Positions 374–389 (LNKKSKGVSGYKSKKT) are enriched in basic residues.

The protein belongs to the XPG/RAD2 endonuclease family. FEN1 subfamily. As to quaternary structure, interacts with PCNA. Three molecules of FEN1 bind to one PCNA trimer with each molecule binding to one PCNA monomer. PCNA stimulates the nuclease activity without altering cleavage specificity. Mg(2+) is required as a cofactor. In terms of processing, phosphorylated. Phosphorylation upon DNA damage induces relocalization to the nuclear plasma.

The protein localises to the nucleus. It is found in the nucleolus. It localises to the nucleoplasm. Its subcellular location is the mitochondrion. Functionally, structure-specific nuclease with 5'-flap endonuclease and 5'-3' exonuclease activities involved in DNA replication and repair. During DNA replication, cleaves the 5'-overhanging flap structure that is generated by displacement synthesis when DNA polymerase encounters the 5'-end of a downstream Okazaki fragment. It enters the flap from the 5'-end and then tracks to cleave the flap base, leaving a nick for ligation. Also involved in the long patch base excision repair (LP-BER) pathway, by cleaving within the apurinic/apyrimidinic (AP) site-terminated flap. Acts as a genome stabilization factor that prevents flaps from equilibrating into structures that lead to duplications and deletions. Also possesses 5'-3' exonuclease activity on nicked or gapped double-stranded DNA, and exhibits RNase H activity. Also involved in replication and repair of rDNA and in repairing mitochondrial DNA. The chain is Flap endonuclease 1 from Ostreococcus tauri.